A 272-amino-acid polypeptide reads, in one-letter code: HMP-PP phosphatase (272 aa).

Catalysis depends on aspartate 8, which acts as the Nucleophile. Residues aspartate 8, aspartate 10, and aspartate 212 each coordinate Mg(2+).

Belongs to the HAD-like hydrolase superfamily. Cof family. The cofactor is Mg(2+).

It catalyses the reaction 4-amino-2-methyl-5-(diphosphooxymethyl)pyrimidine + H2O = 4-amino-2-methyl-5-(phosphooxymethyl)pyrimidine + phosphate + H(+). Functionally, catalyzes the hydrolysis of 4-amino-2-methyl-5-hydroxymethylpyrimidine pyrophosphate (HMP-PP) to 4-amino-2-methyl-5-hydroxymethylpyrimidine phosphate (HMP-P). The sequence is that of HMP-PP phosphatase from Cronobacter sakazakii (strain ATCC BAA-894) (Enterobacter sakazakii).